The sequence spans 658 residues: MSDMFLPARMRKLKIITLDQYSDSVVRSLHEEGVTQIDDISERIQQDAEWRQILKPSRATPYTGRVSSLLMKTSGILDFLGSVAAEEKGLRDTIREFINPPIFEKREVEELDTESLIERAEETLGRVESETRVMEEKLNELDSERSAVESSLSVAEKLKDFDIDFSDLQDSEYITGIAGRITAENLPELRDKLADITDELVISDREGENKAERILIIVTLKKHADSIASVLRRMEFERFEISELQGRPSEIISSSKTRLEEISRERKEIISKLRDINAEWEDELLVLREQLEIEKERNEVFSLFGETRKTVMLEAWVPLKEADRVIAVVEESSEGTALTDLEDPDPEEVPVLLDNPRFAKPYETFVEMYSPLKYNEIDPTIFMAFVFPFFFGFCLTDAGYGIIDALIGFILYRGLGKVNNFMRNFGIIMMSCGVWAFILGMVTNGFIGDFFPRFFNITLPTVIPAIDAFVNPQNILIMALTVGVLHINFGLILGARNNIRLGNMREALGSQIVWLILELGIILYLVGGMIFGAPLIILAFAMLLYYNGLFGLMDVSGFLGTLLSYARLLALCLSTGGIAMTVNILTGLSYEMIPVIGVVLAPIIFVFGHIANNAFQSLGAFINSLRLHYVEFFAQFYMGGKNKFNAFRAERNFTKIRR.

Helical transmembrane passes span 383–403 (MAFVFPFFFGFCLTDAGYGII), 427–447 (IIMMSCGVWAFILGMVTNGFI), 475–495 (ILIMALTVGVLHINFGLILGA), 507–526 (ALGSQIVWLILELGIILYLV), 530–552 (IFGAPLIILAFAMLLYYNGLFGL), 568–588 (LLALCLSTGGIAMTVNILTGL), and 591–611 (EMIPVIGVVLAPIIFVFGHIA).

It belongs to the V-ATPase 116 kDa subunit family. In terms of assembly, has multiple subunits with at least A(3), B(3), C, D, E, F, H, I and proteolipid K(x).

It is found in the cell membrane. Functionally, component of the A-type ATP synthase that produces ATP from ADP in the presence of a proton gradient across the membrane. This chain is A-type ATP synthase subunit I, found in Methanothermobacter thermautotrophicus (strain ATCC 29096 / DSM 1053 / JCM 10044 / NBRC 100330 / Delta H) (Methanobacterium thermoautotrophicum).